The primary structure comprises 188 residues: Peptidyl-tRNA hydrolase (188 aa).

Residue Phe14 coordinates tRNA. His19 serves as the catalytic Proton acceptor. Residues Tyr64, Asn66, and Asn112 each coordinate tRNA.

It belongs to the PTH family. Monomer.

It is found in the cytoplasm. The catalysed reaction is an N-acyl-L-alpha-aminoacyl-tRNA + H2O = an N-acyl-L-amino acid + a tRNA + H(+). Its function is as follows. Hydrolyzes ribosome-free peptidyl-tRNAs (with 1 or more amino acids incorporated), which drop off the ribosome during protein synthesis, or as a result of ribosome stalling. In terms of biological role, catalyzes the release of premature peptidyl moieties from peptidyl-tRNA molecules trapped in stalled 50S ribosomal subunits, and thus maintains levels of free tRNAs and 50S ribosomes. The protein is Peptidyl-tRNA hydrolase of Aster yellows witches'-broom phytoplasma (strain AYWB).